Here is a 697-residue protein sequence, read N- to C-terminus: Elongation factor G 2 (697 aa).

The tr-type G domain maps to 5-280 (SKYRNIGIFA…AVVDYLPAPD (276 aa)). GTP contacts are provided by residues 14–21 (AHVDAGKT), 78–82 (DTPGH), and 132–135 (NKLD).

It belongs to the TRAFAC class translation factor GTPase superfamily. Classic translation factor GTPase family. EF-G/EF-2 subfamily.

The protein localises to the cytoplasm. Functionally, catalyzes the GTP-dependent ribosomal translocation step during translation elongation. During this step, the ribosome changes from the pre-translocational (PRE) to the post-translocational (POST) state as the newly formed A-site-bound peptidyl-tRNA and P-site-bound deacylated tRNA move to the P and E sites, respectively. Catalyzes the coordinated movement of the two tRNA molecules, the mRNA and conformational changes in the ribosome. The polypeptide is Elongation factor G 2 (fusB) (Shewanella oneidensis (strain ATCC 700550 / JCM 31522 / CIP 106686 / LMG 19005 / NCIMB 14063 / MR-1)).